We begin with the raw amino-acid sequence, 437 residues long: Adenylosuccinate synthetase (437 aa).

GTP contacts are provided by residues 13–19 and 41–43; these read GDEGKGK and GHT. The active-site Proton acceptor is aspartate 14. Positions 14 and 41 each coordinate Mg(2+). Residues 14–17, 39–42, threonine 130, arginine 144, glutamine 225, threonine 240, and arginine 310 contribute to the IMP site; these read DEGK and NAGH. Catalysis depends on histidine 42, which acts as the Proton donor. 306-312 lines the substrate pocket; that stretch reads ATTGRLR. GTP-binding positions include arginine 312, 338-340, and 421-423; these read KLD and STG.

This sequence belongs to the adenylosuccinate synthetase family. In terms of assembly, homodimer. Requires Mg(2+) as cofactor.

The protein resides in the cytoplasm. It catalyses the reaction IMP + L-aspartate + GTP = N(6)-(1,2-dicarboxyethyl)-AMP + GDP + phosphate + 2 H(+). It functions in the pathway purine metabolism; AMP biosynthesis via de novo pathway; AMP from IMP: step 1/2. Plays an important role in the de novo pathway of purine nucleotide biosynthesis. Catalyzes the first committed step in the biosynthesis of AMP from IMP. This Psychromonas ingrahamii (strain DSM 17664 / CCUG 51855 / 37) protein is Adenylosuccinate synthetase.